Consider the following 320-residue polypeptide: R2-like ligand binding oxidase (320 aa).

Mn(2+)-binding residues include Glu68, Glu101, and His104. A cross-link (3-(O4'-tyrosyl)-valine (Val-Tyr)) is located at residues 71-162 (VTKDIQPFMS…AAQVRASVVY (92 aa)). Glu101 lines the Fe cation pocket. Positions 167, 202, and 205 each coordinate Fe cation.

This sequence belongs to the ribonucleoside diphosphate reductase small chain family. R2-like ligand binding oxidase subfamily. Homodimer. Requires Fe cation as cofactor. The cofactor is Mn(2+).

Its function is as follows. Probable oxidase that might be involved in lipid metabolism. The chain is R2-like ligand binding oxidase (nrdB) from Mycolicibacterium smegmatis (strain ATCC 700084 / mc(2)155) (Mycobacterium smegmatis).